The sequence spans 180 residues: NADH-quinone oxidoreductase subunit I (180 aa).

4Fe-4S ferredoxin-type domains follow at residues 50–80 and 90–119; these read LTRDPDGEERCVACNLCAVACPVGCISLQKT and EFFRINFSRCIFCGLCEEACPTTAIQLTPD. Positions 60, 63, 66, 70, 99, 102, 105, and 109 each coordinate [4Fe-4S] cluster.

This sequence belongs to the complex I 23 kDa subunit family. In terms of assembly, NDH-1 is composed of 13 different subunits. Subunits NuoA, H, J, K, L, M, N constitute the membrane sector of the complex. Requires [4Fe-4S] cluster as cofactor.

The protein localises to the cell inner membrane. The catalysed reaction is a quinone + NADH + 5 H(+)(in) = a quinol + NAD(+) + 4 H(+)(out). Its function is as follows. NDH-1 shuttles electrons from NADH, via FMN and iron-sulfur (Fe-S) centers, to quinones in the respiratory chain. The immediate electron acceptor for the enzyme in this species is believed to be ubiquinone. Couples the redox reaction to proton translocation (for every two electrons transferred, four hydrogen ions are translocated across the cytoplasmic membrane), and thus conserves the redox energy in a proton gradient. The sequence is that of NADH-quinone oxidoreductase subunit I from Shigella dysenteriae serotype 1 (strain Sd197).